A 146-amino-acid chain; its full sequence is MAAYLLAVAILFCIQGWPSGTVQGQVMPFMEVFKRSVCQTRETLVPVLEEHPSEIADLFKPSCATVLRCGGCCSDESLACTAVGKRSVGREILRVDPRKGTSKIEVMQFTEHTDCECRPRSRSGVDSGKRKRNPEEGEPRAKFPFV.

Residues 1-24 (MAAYLLAVAILFCIQGWPSGTVQG) form the signal peptide. Gln-25 carries the pyrrolidone carboxylic acid modification. 3 disulfides stabilise this stretch: Cys-38-Cys-80, Cys-69-Cys-115, and Cys-73-Cys-117. The segment at 116-146 (ECRPRSRSGVDSGKRKRNPEEGEPRAKFPFV) is disordered. The span at 133 to 146 (NPEEGEPRAKFPFV) shows a compositional bias: basic and acidic residues.

This sequence belongs to the PDGF/VEGF growth factor family. Snake venom VEGF subfamily. As to quaternary structure, homodimer; disulfide-linked. Expressed by the venom gland.

The protein resides in the secreted. Snake venom VEGFs that may contribute to venom dispersion and prey subjugation by inducing vascular permeability and hypotension. This protein induces an increase in capillary permeability after intradermal injection, in a VEGFR-2 (KDR) dependent manner. In addition, it provokes a drastic hypotensive effect after intravenous injection. The hypotension is mediated by nitric oxide (NO), which is produced by VEGF-activated endothelium NO synthase. Also induces angiogenesis in vitro. Unlike other crotalid VEGFs, this protein probably interacts with VEGF receptor-2 (KDR). This chain is Vascular endothelial growth factor isoform GtVF, found in Gloydius tsushimaensis (Tsushima Island pitviper).